A 337-amino-acid polypeptide reads, in one-letter code: Phosphate acyltransferase (337 aa).

Belongs to the PlsX family. In terms of assembly, homodimer. Probably interacts with PlsY.

It is found in the cytoplasm. It catalyses the reaction a fatty acyl-[ACP] + phosphate = an acyl phosphate + holo-[ACP]. The protein operates within lipid metabolism; phospholipid metabolism. In terms of biological role, catalyzes the reversible formation of acyl-phosphate (acyl-PO(4)) from acyl-[acyl-carrier-protein] (acyl-ACP). This enzyme utilizes acyl-ACP as fatty acyl donor, but not acyl-CoA. The chain is Phosphate acyltransferase from Polynucleobacter necessarius subsp. necessarius (strain STIR1).